A 324-amino-acid polypeptide reads, in one-letter code: tRNA dimethylallyltransferase (324 aa).

17 to 24 is an ATP binding site; the sequence is GPTASGKT. 19-24 contributes to the substrate binding site; that stretch reads TASGKT. Interaction with substrate tRNA regions lie at residues 42–45, 166–170, and 251–256; these read DSAL, QRIQR, and RCVGYR.

This sequence belongs to the IPP transferase family. Monomer. Mg(2+) is required as a cofactor.

It carries out the reaction adenosine(37) in tRNA + dimethylallyl diphosphate = N(6)-dimethylallyladenosine(37) in tRNA + diphosphate. In terms of biological role, catalyzes the transfer of a dimethylallyl group onto the adenine at position 37 in tRNAs that read codons beginning with uridine, leading to the formation of N6-(dimethylallyl)adenosine (i(6)A). The polypeptide is tRNA dimethylallyltransferase (Burkholderia thailandensis (strain ATCC 700388 / DSM 13276 / CCUG 48851 / CIP 106301 / E264)).